Reading from the N-terminus, the 911-residue chain is Gem-associated protein 4a (911 aa).

Component of the core survival motor neuron (SMN) complex composed of Smn, Gem2, Gem3, rig/Gem5 and one of 3 almost identical Gem4 paralogs encoded by Glos/Gem4a, Gem4b or Gem4c. Interacts with Smn; the interaction is probably indirect.

Functionally, component of the survival motor neuron (SMN) complex that catalyzes the assembly of small nuclear ribonucleoproteins (snRNPs), the building blocks of the spliceosome, and thereby plays an important role in the splicing of cellular pre-mRNAs. One of 3 almost identical paralogs (Glos/Gem4a, Gem4b and Gem4c), resulting from a genomic triplication, that have some redundant function. Required for neuromuscular function and organismal viability. This chain is Gem-associated protein 4a, found in Drosophila melanogaster (Fruit fly).